The sequence spans 374 residues: 5-pentadecatrienyl resorcinol O-methyltransferase (374 aa).

S-adenosyl-L-methionine-binding residues include Asp239, Asp261, Met262, and Lys275. His279 (proton acceptor) is an active-site residue.

This sequence belongs to the class I-like SAM-binding methyltransferase superfamily. Cation-independent O-methyltransferase family. COMT subfamily. In terms of assembly, homodimer. In terms of tissue distribution, expressed predominantly in root hairs.

The enzyme catalyses (8Z,11Z)-5-(pentadeca-8,11,14-trien-1-yl)resorcinol + S-adenosyl-L-methionine = (8Z,11Z)-5-(pentadeca- 8,11,14-trien-1-yl)resorcinol-3-methyl ether + S-adenosyl-L-homocysteine + H(+). In terms of biological role, O-methyltransferase involved in the biosynthetic pathway of the phytotoxin sorgoleone, a potent broad-spectrum inhibitor active against many agronomically important monocot and dicot weed species. Substrate specificity for alkylresorcinols. Strong preference for a five carbons alkyl side chain. This is 5-pentadecatrienyl resorcinol O-methyltransferase (OMT3) from Sorghum bicolor (Sorghum).